An 85-amino-acid chain; its full sequence is Toxin TdNa9 (85 aa).

The N-terminal stretch at 1 to 21 (MLKFAIAVALLLFIGLELREA) is a signal peptide. An LCN-type CS-alpha/beta domain is found at 22–84 (RDGYPQSKVN…YGDPGTKPCM (63 aa)). Intrachain disulfides connect cysteine 33–cysteine 83, cysteine 37–cysteine 58, cysteine 43–cysteine 63, and cysteine 47–cysteine 65.

Belongs to the long (4 C-C) scorpion toxin superfamily. Sodium channel inhibitor family. Beta subfamily. As to expression, expressed by the venom gland.

It localises to the secreted. Functionally, alpha toxins bind voltage-independently at site-3 of sodium channels (Nav) and inhibit the inactivation of the activated channels, thereby blocking neuronal transmission. This toxin binds, in vitro, to sodium channels and inhibits the inactivation of the activated channels. Seems not toxic to mice, crickets and sweet-water shrimps. The polypeptide is Toxin TdNa9 (Tityus discrepans (Venezuelan scorpion)).